We begin with the raw amino-acid sequence, 804 residues long: Leucine--tRNA ligase (804 aa).

A 'HIGH' region motif is present at residues 40–51; the sequence is PYPSGAGLHVGH. The 'KMSKS' region motif lies at 574–578; it reads KMSKS. Residue Lys577 coordinates ATP.

It belongs to the class-I aminoacyl-tRNA synthetase family.

It is found in the cytoplasm. It catalyses the reaction tRNA(Leu) + L-leucine + ATP = L-leucyl-tRNA(Leu) + AMP + diphosphate. The chain is Leucine--tRNA ligase from Shouchella clausii (strain KSM-K16) (Alkalihalobacillus clausii).